The sequence spans 145 residues: Bacilliredoxin SERP1075 (145 aa).

This sequence belongs to the bacilliredoxin family.

The sequence is that of Bacilliredoxin SERP1075 from Staphylococcus epidermidis (strain ATCC 35984 / DSM 28319 / BCRC 17069 / CCUG 31568 / BM 3577 / RP62A).